Consider the following 137-residue polypeptide: MRILGLDIGSKTIGVAVSDPLGWTAQGVTTIKRDCYTKDVEAVMKICKEYGVETIVAGMPKNMNGTIGPSGEMVKNLCEQIEKSFDGKIEFWDERLTTVAAHRAMLEADLSRAKRKKIVDKIAATYILQGYLDRISK.

Belongs to the YqgF nuclease family.

It is found in the cytoplasm. Functionally, could be a nuclease involved in processing of the 5'-end of pre-16S rRNA. In Clostridium perfringens (strain ATCC 13124 / DSM 756 / JCM 1290 / NCIMB 6125 / NCTC 8237 / Type A), this protein is Putative pre-16S rRNA nuclease.